The chain runs to 186 residues: Probable nicotinate-nucleotide adenylyltransferase (186 aa).

It belongs to the NadD family.

It carries out the reaction nicotinate beta-D-ribonucleotide + ATP + H(+) = deamido-NAD(+) + diphosphate. It functions in the pathway cofactor biosynthesis; NAD(+) biosynthesis; deamido-NAD(+) from nicotinate D-ribonucleotide: step 1/1. In terms of biological role, catalyzes the reversible adenylation of nicotinate mononucleotide (NaMN) to nicotinic acid adenine dinucleotide (NaAD). This is Probable nicotinate-nucleotide adenylyltransferase from Tropheryma whipplei (strain Twist) (Whipple's bacillus).